A 293-amino-acid chain; its full sequence is Ribonuclease HIII (293 aa).

The RNase H type-2 domain occupies leucine 78–arginine 293. Positions 84, 85, and 187 each coordinate a divalent metal cation.

The protein belongs to the RNase HII family. RnhC subfamily. The cofactor is Mn(2+). Mg(2+) serves as cofactor.

The protein resides in the cytoplasm. The enzyme catalyses Endonucleolytic cleavage to 5'-phosphomonoester.. In terms of biological role, endonuclease that specifically degrades the RNA of RNA-DNA hybrids. The chain is Ribonuclease HIII from Streptococcus pneumoniae serotype 19F (strain G54).